The sequence spans 219 residues: uncharacterized protein (219 aa).

A helical membrane pass occupies residues 28–50 (IVSSLIAGGYALFVSAFTSYVYT). A coiled-coil region spans residues 155–218 (EILRESLSEI…EEIEKELEFF (64 aa)).

It localises to the membrane. This is an uncharacterized protein from Aquifex aeolicus (strain VF5).